The chain runs to 320 residues: ATP-dependent 6-phosphofructokinase (320 aa).

ATP contacts are provided by residues glycine 12, 73–74 (RF), and 103–106 (GDGS). Aspartate 104 is a binding site for Mg(2+). 126 to 128 (TID) serves as a coordination point for substrate. Aspartate 128 functions as the Proton acceptor in the catalytic mechanism. An ADP-binding site is contributed by arginine 155. Substrate-binding positions include arginine 163 and 170 to 172 (MGR). Residues 186-188 (GCE) and lysine 212 each bind ADP. Substrate contacts are provided by residues glutamate 223, arginine 244, and 250–253 (HIQR).

Belongs to the phosphofructokinase type A (PFKA) family. ATP-dependent PFK group I subfamily. Prokaryotic clade 'B1' sub-subfamily. In terms of assembly, homotetramer. It depends on Mg(2+) as a cofactor.

It is found in the cytoplasm. It catalyses the reaction beta-D-fructose 6-phosphate + ATP = beta-D-fructose 1,6-bisphosphate + ADP + H(+). It participates in carbohydrate degradation; glycolysis; D-glyceraldehyde 3-phosphate and glycerone phosphate from D-glucose: step 3/4. Its activity is regulated as follows. Allosterically activated by ADP and other diphosphonucleosides, and allosterically inhibited by phosphoenolpyruvate. Functionally, catalyzes the phosphorylation of D-fructose 6-phosphate to fructose 1,6-bisphosphate by ATP, the first committing step of glycolysis. This is ATP-dependent 6-phosphofructokinase from Buchnera aphidicola subsp. Cinara cedri (strain Cc).